Reading from the N-terminus, the 150-residue chain is UPF0178 protein Ssed_1350 (150 aa).

The protein belongs to the UPF0178 family.

The polypeptide is UPF0178 protein Ssed_1350 (Shewanella sediminis (strain HAW-EB3)).